Reading from the N-terminus, the 228-residue chain is Aspartyl protease inhibitor (228 aa).

Residues Met-1–Ala-15 form the signal peptide. Residues Lys-88–Pro-112 show a composition bias toward basic and acidic residues. The tract at residues Lys-88–Ser-119 is disordered. Cysteines 134 and 224 form a disulfide.

Belongs to the protease inhibitor I33 family.

Its subcellular location is the secreted. Its function is as follows. Aspartyl protease inhibitor. This chain is Aspartyl protease inhibitor, found in Trichostrongylus colubriformis (Black scour worm).